Reading from the N-terminus, the 457-residue chain is Multidrug resistance protein MdtK (457 aa).

Topologically, residues 1-10 (MQKYISEARL) are cytoplasmic. Residues 11–31 (LLALAIPVILAQIAQTAMGFV) form a helical membrane-spanning segment. The Extracellular portion of the chain corresponds to 32-52 (DTVMAGGYSATDMAAVAIGTS). The chain crosses the membrane as a helical span at residues 53–73 (IWLPAILFGHGLLLALTPVIA). The Cytoplasmic portion of the chain corresponds to 74-92 (QLNGSGRRERIAHQVRQGF). A helical transmembrane segment spans residues 93 to 113 (WLAGFVSVLIMLVLWNAGYII). Over 114 to 126 (RSMENIDPALADK) the chain is Extracellular. Residues 127 to 147 (AVGYLRALLWGAPGYLFFQVA) form a helical membrane-spanning segment. Over 148 to 159 (RNQCEGLAKTKP) the chain is Cytoplasmic. A helical transmembrane segment spans residues 160–180 (GMVMGFIGLLVNIPVNYIFIY). At 181–188 (GHFGMPEL) the chain is on the extracellular side. Residues 189–209 (GGVGCGVATAAVYWVMFLAMV) form a helical membrane-spanning segment. Topologically, residues 210–242 (SYIKRARSMRDIRNEKGTAKPDPAVMKRLIQLG) are cytoplasmic. A helical transmembrane segment spans residues 243–263 (LPIALALFFEVTLFAVVALLV). Residues 264-275 (SPLGIVDVAGHQ) are Extracellular-facing. Residues 276-296 (IALNFSSLMFVLPMSLAAAVT) traverse the membrane as a helical segment. Residues 297-313 (IRVGYRLGQGSTLDAQT) lie on the Cytoplasmic side of the membrane. A helical transmembrane segment spans residues 314 to 334 (AARTGLMVGVCMATLTAIFTV). Residues 335–349 (SLREQIALLYNDNPE) are Extracellular-facing. The helical transmembrane segment at 350-370 (VVTLAAHLMLLAAVYQISDSI) threads the bilayer. The Cytoplasmic segment spans residues 371–386 (QVIGSGILRGYKDTRS). The chain crosses the membrane as a helical span at residues 387-407 (IFYITFTAYWVLGLPSGYILA). The Extracellular portion of the chain corresponds to 408 to 417 (LTDLVVEPMG). Residues 418–438 (PAGFWIGFIIGLTSAAIMMML) traverse the membrane as a helical segment. Topologically, residues 439 to 457 (RMRYLQRLPSAIILQRASR) are cytoplasmic.

It belongs to the multi antimicrobial extrusion (MATE) (TC 2.A.66.1) family. MdtK subfamily.

It localises to the cell inner membrane. In terms of biological role, multidrug efflux pump that functions probably as a Na(+)/drug antiporter. The protein is Multidrug resistance protein MdtK (mdtK) of Escherichia coli O157:H7.